The sequence spans 309 residues: MFSNLSKRWAQRTLSKSFYSTATGAASKSGKLTQKLVTAGVAAAGITASTLLYADSLTAEAMTAAEHGLHAPAYAWSHNGPFETFDHASIRRGYQVYREVCAACHSLDRVAWRTLVGVSHTNEEVRNMAEEFEYDDEPDEQGNPKKRPGKLSDYIPGPYPNEQAARAANQGALPPDLSLIVKARHGGCDYIFSLLTGYPDEPPAGVALPPGSNYNPYFPGGSIAMARVLFDDMVEYEDGTPATTSQMAKDVTTFLNWCAEPEHDERKRLGLKTVIILSSLYLLSIWVKKFKWAGIKTRKFVFNPPKPRK.

Residues 1 to 61 (MFSNLSKRWA…LYADSLTAEA (61 aa)) constitute a mitochondrion transit peptide. Residues 62 to 262 (MTAAEHGLHA…TFLNWCAEPE (201 aa)) are Mitochondrial intermembrane-facing. Residues 88–241 (ASIRRGYQVY…DMVEYEDGTP (154 aa)) form the Cytochrome c domain. Residues Cys-101, Cys-104, and His-105 each coordinate heme c. A compositionally biased stretch (acidic residues) spans 131-140 (EFEYDDEPDE). The interval 131 to 168 (EFEYDDEPDEQGNPKKRPGKLSDYIPGPYPNEQAARAA) is disordered. A heme c-binding site is contributed by Met-225. The chain crosses the membrane as a helical span at residues 263–296 (HDERKRLGLKTVIILSSLYLLSIWVKKFKWAGIK). Over 297 to 309 (TRKFVFNPPKPRK) the chain is Mitochondrial matrix.

The protein belongs to the cytochrome c family. Component of the ubiquinol-cytochrome c oxidoreductase (cytochrome b-c1 complex, complex III, CIII), a multisubunit enzyme composed of 10 subunits. The complex is composed of 3 respiratory subunits cytochrome b (COB), cytochrome c1 (CYT1) and Rieske protein (RIP1), 2 core protein subunits COR1 and QCR2, and 5 low-molecular weight protein subunits QCR6, QCR7, QCR8, QCR9 and QCR10. The complex exists as an obligatory dimer and forms supercomplexes (SCs) in the inner mitochondrial membrane with a monomer or a dimer of cytochrome c oxidase (complex IV, CIV), resulting in 2 different assemblies (supercomplexes III(2)IV and III(2)IV(2)). CYT1 interacts with COX5A at the CIII-CIV interface. It depends on heme c as a cofactor.

Its subcellular location is the mitochondrion inner membrane. It carries out the reaction a quinol + 2 Fe(III)-[cytochrome c](out) = a quinone + 2 Fe(II)-[cytochrome c](out) + 2 H(+)(out). In terms of biological role, component of the ubiquinol-cytochrome c oxidoreductase, a multisubunit transmembrane complex that is part of the mitochondrial electron transport chain which drives oxidative phosphorylation. The respiratory chain contains 3 multisubunit complexes succinate dehydrogenase (complex II, CII), ubiquinol-cytochrome c oxidoreductase (cytochrome b-c1 complex, complex III, CIII) and cytochrome c oxidase (complex IV, CIV), that cooperate to transfer electrons derived from NADH and succinate to molecular oxygen, creating an electrochemical gradient over the inner membrane that drives transmembrane transport and the ATP synthase. The cytochrome b-c1 complex catalyzes electron transfer from ubiquinol to cytochrome c, linking this redox reaction to translocation of protons across the mitochondrial inner membrane, with protons being carried across the membrane as hydrogens on the quinol. In the process called Q cycle, 2 protons are consumed from the matrix, 4 protons are released into the intermembrane space and 2 electrons are passed to cytochrome c. Cytochrome c1 is a catalytic core subunit containing a c-type heme. It transfers electrons from the [2Fe-2S] iron-sulfur cluster of the Rieske protein to cytochrome c. This Saccharomyces cerevisiae (strain ATCC 204508 / S288c) (Baker's yeast) protein is Cytochrome c1, heme protein, mitochondrial (CYT1).